A 605-amino-acid chain; its full sequence is Alpha-amylase (605 aa).

The N-terminal stretch at 1–33 is a signal peptide; the sequence is MGVRRSLAALLAALLGCATSLVALTVAASPAHA. Positions 130 and 189 each coordinate Ca(2+). Aspartate 219 (nucleophile) is an active-site residue. Histidine 223 provides a ligand contact to Ca(2+). Catalysis depends on glutamate 253, which acts as the Proton donor. Residues 500–605 form the CBM20 domain; that stretch reads GDDCTTVTAR…CSQNFYDSWR (106 aa).

It belongs to the glycosyl hydrolase 13 family. In terms of assembly, monomer. Ca(2+) serves as cofactor.

The catalysed reaction is Endohydrolysis of (1-&gt;4)-alpha-D-glucosidic linkages in polysaccharides containing three or more (1-&gt;4)-alpha-linked D-glucose units.. This Thermomonospora curvata protein is Alpha-amylase (tam).